The sequence spans 883 residues: DNA double-strand break repair Rad50 ATPase (883 aa).

ATP is bound by residues Arg12, 32–38 (NGSGKSS), and Gln134. Residues 218 to 420 (ELRGELGGLE…EIGSRRGELK (203 aa)) adopt a coiled-coil conformation. Positions 395–492 (IQKARERKEE…ELVEVEKTLK (98 aa)) constitute a Zinc-hook domain. 2 residues coordinate Zn(2+): Cys440 and Cys443. Coiled-coil stretches lie at residues 452–585 (RKEL…KKLG) and 620–741 (EDLL…LLKE). Position 790-795 (790-795 (FLSGGE)) interacts with ATP.

The protein belongs to the SMC family. RAD50 subfamily. Homodimer. Forms a heterotetramer composed of two Mre11 subunits and two Rad50 subunits. The cofactor is Zn(2+).

Its function is as follows. Part of the Rad50/Mre11 complex, which is involved in the early steps of DNA double-strand break (DSB) repair. The complex may facilitate opening of the processed DNA ends to aid in the recruitment of HerA and NurA. Rad50 controls the balance between DNA end bridging and DNA resection via ATP-dependent structural rearrangements of the Rad50/Mre11 complex. The polypeptide is DNA double-strand break repair Rad50 ATPase (Thermococcus kodakarensis (strain ATCC BAA-918 / JCM 12380 / KOD1) (Pyrococcus kodakaraensis (strain KOD1))).